The chain runs to 701 residues: Potassium-transporting ATPase ATP-binding subunit 1 (701 aa).

A disordered region spans residues 1 to 26 (MNPVAPTRKVKPPRNRPSDRRQARKK). Transmembrane regions (helical) follow at residues 57 to 77 (MFVVWVATLVTLAVTINPDLF), 90 to 110 (GLLTGILFFTVWFANFAEAVA), 241 to 261 (VALTVLLAVLSLVFLFVIATL), and 278 to 298 (IALLVALIPTTIGGLLSAIGI). The 4-aspartylphosphate intermediate role is filled by aspartate 329. ATP-binding positions include aspartate 366, glutamate 370, 397 to 404 (FSAKTRMS), and lysine 416. Residues aspartate 539 and aspartate 543 each coordinate Mg(2+). The next 3 membrane-spanning stretches (helical) occupy residues 599–619 (FSIANDIAKYFAIIPVIFAAA), 635–655 (AVLSALIYNALIIPALIPLAL), and 681–701 (VIAPFIAIKLIDILITLVGLA).

It belongs to the cation transport ATPase (P-type) (TC 3.A.3) family. Type IA subfamily. The system is composed of three essential subunits: KdpA, KdpB and KdpC.

The protein resides in the cell inner membrane. It catalyses the reaction K(+)(out) + ATP + H2O = K(+)(in) + ADP + phosphate + H(+). In terms of biological role, part of the high-affinity ATP-driven potassium transport (or Kdp) system, which catalyzes the hydrolysis of ATP coupled with the electrogenic transport of potassium into the cytoplasm. This subunit is responsible for energy coupling to the transport system and for the release of the potassium ions to the cytoplasm. The chain is Potassium-transporting ATPase ATP-binding subunit 1 from Nostoc sp. (strain PCC 7120 / SAG 25.82 / UTEX 2576).